Consider the following 397-residue polypeptide: Elongation factor Tu (397 aa).

Positions 10-207 constitute a tr-type G domain; the sequence is LPHVNVGTIG…TLDSYIPEPV (198 aa). The segment at 19 to 26 is G1; sequence GHVDHGKT. 19 to 26 serves as a coordination point for GTP; that stretch reads GHVDHGKT. Thr26 contributes to the Mg(2+) binding site. A G2 region spans residues 60-64; the sequence is GITIN. The G3 stretch occupies residues 81–84; that stretch reads DCPG. GTP-binding positions include 81-85 and 136-139; these read DCPGH and NKAD. The interval 136–139 is G4; that stretch reads NKAD. The tract at residues 174 to 176 is G5; sequence SAR.

The protein belongs to the TRAFAC class translation factor GTPase superfamily. Classic translation factor GTPase family. EF-Tu/EF-1A subfamily. In terms of assembly, monomer.

It localises to the cytoplasm. The enzyme catalyses GTP + H2O = GDP + phosphate + H(+). Its function is as follows. GTP hydrolase that promotes the GTP-dependent binding of aminoacyl-tRNA to the A-site of ribosomes during protein biosynthesis. This Pseudomonas putida (strain ATCC 700007 / DSM 6899 / JCM 31910 / BCRC 17059 / LMG 24140 / F1) protein is Elongation factor Tu.